The sequence spans 82 residues: Small ribosomal subunit protein uS17 (82 aa).

The protein belongs to the universal ribosomal protein uS17 family. In terms of assembly, part of the 30S ribosomal subunit.

Its function is as follows. One of the primary rRNA binding proteins, it binds specifically to the 5'-end of 16S ribosomal RNA. This Rhodopseudomonas palustris (strain HaA2) protein is Small ribosomal subunit protein uS17.